We begin with the raw amino-acid sequence, 135 residues long: Large ribosomal subunit protein uL16c (135 aa).

This sequence belongs to the universal ribosomal protein uL16 family. In terms of assembly, part of the 50S ribosomal subunit.

Its subcellular location is the plastid. The protein localises to the chloroplast. The sequence is that of Large ribosomal subunit protein uL16c from Drimys granadensis.